The chain runs to 360 residues: Probable dual-specificity RNA methyltransferase RlmN (360 aa).

The Proton acceptor role is filled by Glu-91. The Radical SAM core domain maps to 97–335 (QHYGQSVCVT…CVVRQEHGTD (239 aa)). A disulfide bridge links Cys-104 with Cys-340. Residues Cys-111, Cys-115, and Cys-118 each contribute to the [4Fe-4S] cluster site. S-adenosyl-L-methionine-binding positions include 163–164 (GE), Ser-195, 218–220 (SLH), and Asn-296. Residue Cys-340 is the S-methylcysteine intermediate of the active site.

Belongs to the radical SAM superfamily. RlmN family. It depends on [4Fe-4S] cluster as a cofactor.

The protein resides in the cytoplasm. It carries out the reaction adenosine(2503) in 23S rRNA + 2 reduced [2Fe-2S]-[ferredoxin] + 2 S-adenosyl-L-methionine = 2-methyladenosine(2503) in 23S rRNA + 5'-deoxyadenosine + L-methionine + 2 oxidized [2Fe-2S]-[ferredoxin] + S-adenosyl-L-homocysteine. It catalyses the reaction adenosine(37) in tRNA + 2 reduced [2Fe-2S]-[ferredoxin] + 2 S-adenosyl-L-methionine = 2-methyladenosine(37) in tRNA + 5'-deoxyadenosine + L-methionine + 2 oxidized [2Fe-2S]-[ferredoxin] + S-adenosyl-L-homocysteine. In terms of biological role, specifically methylates position 2 of adenine 2503 in 23S rRNA and position 2 of adenine 37 in tRNAs. The protein is Probable dual-specificity RNA methyltransferase RlmN of Streptococcus equi subsp. zooepidemicus (strain MGCS10565).